The chain runs to 58 residues: Large ribosomal subunit protein bL32 (58 aa).

Belongs to the bacterial ribosomal protein bL32 family.

This chain is Large ribosomal subunit protein bL32, found in Carboxydothermus hydrogenoformans (strain ATCC BAA-161 / DSM 6008 / Z-2901).